We begin with the raw amino-acid sequence, 408 residues long: MMVKVASITKLEDGSIVTPKGFSAIGTAIGLKKGKKDLGAIVCDTPASCAAVYTTNQIQAAPLQVTKDSIATEGKLQAIIVNSGNANACTGMKGLQDAYEMRALGAEHFGVKENYVAVASTGVIGVPLPMEIIRKGIVTLIPAKEENEAHSFSEAILTTDLITKETCYEMIIDGKKVTIAGVAKGSGMIHPNMATMLSFITTDAHIEHDVLQTALSQITNHTFNQITVDGDTSTNDMVIAMASGLSETKPIDMEHADWETFVFALQKVCEDLAKKIAQDGEGATKLIEVNVLGAQTNEEAKKIAKQIVGSSLVKTAIHGEDPNWGRIISSIGQSEVAINPNTIDITLQSIVVLKNSEPQMFSEEEMKMRLQEHEIMIDVYLHLGEETGSAWGCDLSYEYVKINACYRT.

The substrate site is built by threonine 158, lysine 184, threonine 195, glutamate 281, asparagine 403, and threonine 408. Residue threonine 195 is the Nucleophile of the active site.

It belongs to the ArgJ family. Heterotetramer of two alpha and two beta chains.

The protein resides in the cytoplasm. It catalyses the reaction N(2)-acetyl-L-ornithine + L-glutamate = N-acetyl-L-glutamate + L-ornithine. It carries out the reaction L-glutamate + acetyl-CoA = N-acetyl-L-glutamate + CoA + H(+). Its pathway is amino-acid biosynthesis; L-arginine biosynthesis; L-ornithine and N-acetyl-L-glutamate from L-glutamate and N(2)-acetyl-L-ornithine (cyclic): step 1/1. It functions in the pathway amino-acid biosynthesis; L-arginine biosynthesis; N(2)-acetyl-L-ornithine from L-glutamate: step 1/4. In terms of biological role, catalyzes two activities which are involved in the cyclic version of arginine biosynthesis: the synthesis of N-acetylglutamate from glutamate and acetyl-CoA as the acetyl donor, and of ornithine by transacetylation between N(2)-acetylornithine and glutamate. This Bacillus cereus (strain ZK / E33L) protein is Arginine biosynthesis bifunctional protein ArgJ.